A 310-amino-acid polypeptide reads, in one-letter code: Porphobilinogen deaminase (310 aa).

Cysteine 242 bears the S-(dipyrrolylmethanemethyl)cysteine mark.

Belongs to the HMBS family. In terms of assembly, monomer. It depends on dipyrromethane as a cofactor.

It carries out the reaction 4 porphobilinogen + H2O = hydroxymethylbilane + 4 NH4(+). The protein operates within porphyrin-containing compound metabolism; protoporphyrin-IX biosynthesis; coproporphyrinogen-III from 5-aminolevulinate: step 2/4. Functionally, tetrapolymerization of the monopyrrole PBG into the hydroxymethylbilane pre-uroporphyrinogen in several discrete steps. The chain is Porphobilinogen deaminase from Shewanella baltica (strain OS155 / ATCC BAA-1091).